We begin with the raw amino-acid sequence, 397 residues long: Succinate--CoA ligase [ADP-forming] subunit beta (397 aa).

The ATP-grasp domain maps to 9–254 (KELLRGYGAP…TSEEDEKEIE (246 aa)). ATP contacts are provided by residues Lys-46, 53–55 (GRG), Glu-109, Ala-112, and Glu-117. Residues Asn-209 and Asp-223 each contribute to the Mg(2+) site. Residues Asn-274 and 331-333 (GIM) contribute to the substrate site.

The protein belongs to the succinate/malate CoA ligase beta subunit family. As to quaternary structure, heterotetramer of two alpha and two beta subunits. It depends on Mg(2+) as a cofactor.

It carries out the reaction succinate + ATP + CoA = succinyl-CoA + ADP + phosphate. The catalysed reaction is GTP + succinate + CoA = succinyl-CoA + GDP + phosphate. Its pathway is carbohydrate metabolism; tricarboxylic acid cycle; succinate from succinyl-CoA (ligase route): step 1/1. Functionally, succinyl-CoA synthetase functions in the citric acid cycle (TCA), coupling the hydrolysis of succinyl-CoA to the synthesis of either ATP or GTP and thus represents the only step of substrate-level phosphorylation in the TCA. The beta subunit provides nucleotide specificity of the enzyme and binds the substrate succinate, while the binding sites for coenzyme A and phosphate are found in the alpha subunit. This chain is Succinate--CoA ligase [ADP-forming] subunit beta, found in Chelativorans sp. (strain BNC1).